Consider the following 122-residue polypeptide: Large ribosomal subunit protein uL14c (122 aa).

Belongs to the universal ribosomal protein uL14 family. As to quaternary structure, part of the 50S ribosomal subunit.

It is found in the plastid. The protein localises to the chloroplast. Its function is as follows. Binds to 23S rRNA. This chain is Large ribosomal subunit protein uL14c, found in Acorus calamus (Sweet flag).